A 175-amino-acid chain; its full sequence is NAD(P)H-quinone oxidoreductase subunit J (175 aa).

This sequence belongs to the complex I 30 kDa subunit family. In terms of assembly, NDH-1 can be composed of about 15 different subunits; different subcomplexes with different compositions have been identified which probably have different functions.

The protein resides in the cellular thylakoid membrane. The enzyme catalyses a plastoquinone + NADH + (n+1) H(+)(in) = a plastoquinol + NAD(+) + n H(+)(out). The catalysed reaction is a plastoquinone + NADPH + (n+1) H(+)(in) = a plastoquinol + NADP(+) + n H(+)(out). Functionally, NDH-1 shuttles electrons from an unknown electron donor, via FMN and iron-sulfur (Fe-S) centers, to quinones in the respiratory and/or the photosynthetic chain. The immediate electron acceptor for the enzyme in this species is believed to be plastoquinone. Couples the redox reaction to proton translocation, and thus conserves the redox energy in a proton gradient. Cyanobacterial NDH-1 also plays a role in inorganic carbon-concentration. The chain is NAD(P)H-quinone oxidoreductase subunit J from Nostoc sp. (strain PCC 7120 / SAG 25.82 / UTEX 2576).